Consider the following 173-residue polypeptide: Co-chaperone protein HscB (173 aa).

Residues 2-74 (DYFTLFGLPA…LKRAEYMLSL (73 aa)) enclose the J domain.

The protein belongs to the HscB family. As to quaternary structure, interacts with HscA and stimulates its ATPase activity. Interacts with IscU.

Functionally, co-chaperone involved in the maturation of iron-sulfur cluster-containing proteins. Seems to help targeting proteins to be folded toward HscA. The polypeptide is Co-chaperone protein HscB (Photorhabdus laumondii subsp. laumondii (strain DSM 15139 / CIP 105565 / TT01) (Photorhabdus luminescens subsp. laumondii)).